Here is a 369-residue protein sequence, read N- to C-terminus: Maltose/maltodextrin import ATP-binding protein MalK (369 aa).

The ABC transporter domain occupies Val-4 to Ile-234. Position 36–43 (Gly-36–Ser-43) interacts with ATP.

It belongs to the ABC transporter superfamily. Maltooligosaccharide importer (TC 3.A.1.1.1) family. As to quaternary structure, the complex is composed of two ATP-binding proteins (MalK), two transmembrane proteins (MalG and MalK) and a solute-binding protein (MalE).

The protein resides in the cell inner membrane. It catalyses the reaction D-maltose(out) + ATP + H2O = D-maltose(in) + ADP + phosphate + H(+). Functionally, part of the ABC transporter complex MalEFGK involved in maltose/maltodextrin import. Responsible for energy coupling to the transport system. The polypeptide is Maltose/maltodextrin import ATP-binding protein MalK (Aliivibrio fischeri (strain ATCC 700601 / ES114) (Vibrio fischeri)).